The chain runs to 359 residues: Protein PAM71-homolog, chloroplastic (359 aa).

The N-terminal 66 residues, 1 to 66, are a transit peptide targeting the chloroplast; that stretch reads MKLTSLSKNA…DLLWGKFRVR (66 aa). A disordered region spans residues 71-102; that stretch reads GVGSGSYSGGEEDGSQSSSLDQSPATSSESLK. Positions 85–98 are enriched in low complexity; that stretch reads SQSSSLDQSPATSS. Transmembrane regions (helical) follow at residues 110–130, 149–169, 177–197, 207–227, 269–289, 311–331, and 339–359; these read SLSI…ITFV, AFSL…AALL, LVLL…VVIG, FQTT…FFGL, LTNP…AEWG, GAIA…AFLA, and VGYV…FGVF.

It belongs to the GDT1 family.

The protein localises to the plastid. It is found in the chloroplast membrane. Its function is as follows. Probable chloroplast-localized Mn(2+)/H(+) and/or Ca(2+)/H(+) antiporter regulating Ca(2+), Mn(2+) and pH homeostasis. The protein is Protein PAM71-homolog, chloroplastic of Arabidopsis thaliana (Mouse-ear cress).